A 685-amino-acid chain; its full sequence is Methionine--tRNA ligase (685 aa).

Residues 15 to 25 carry the 'HIGH' region motif; that stretch reads PYANGPIHLGH. Residues Cys-146, Cys-149, Cys-159, and Cys-162 each contribute to the Zn(2+) site. Residues 331–335 carry the 'KMSKS' region motif; it reads KMSKS. Lys-334 contacts ATP. Residues 583–685 form the tRNA-binding domain; it reads DFAKMDLRVA…AGVKAGSRVK (103 aa).

The protein belongs to the class-I aminoacyl-tRNA synthetase family. MetG type 1 subfamily. As to quaternary structure, homodimer. Requires Zn(2+) as cofactor.

The protein localises to the cytoplasm. It carries out the reaction tRNA(Met) + L-methionine + ATP = L-methionyl-tRNA(Met) + AMP + diphosphate. Is required not only for elongation of protein synthesis but also for the initiation of all mRNA translation through initiator tRNA(fMet) aminoacylation. The polypeptide is Methionine--tRNA ligase (Actinobacillus succinogenes (strain ATCC 55618 / DSM 22257 / CCUG 43843 / 130Z)).